The chain runs to 507 residues: ATP synthase subunit alpha, chloroplastic (507 aa).

An ATP-binding site is contributed by 170 to 177; that stretch reads GDRQTGKT.

The protein belongs to the ATPase alpha/beta chains family. In terms of assembly, F-type ATPases have 2 components, CF(1) - the catalytic core - and CF(0) - the membrane proton channel. CF(1) has five subunits: alpha(3), beta(3), gamma(1), delta(1), epsilon(1). CF(0) has four main subunits: a, b, b' and c.

The protein resides in the plastid. It localises to the chloroplast thylakoid membrane. It catalyses the reaction ATP + H2O + 4 H(+)(in) = ADP + phosphate + 5 H(+)(out). Produces ATP from ADP in the presence of a proton gradient across the membrane. The alpha chain is a regulatory subunit. The protein is ATP synthase subunit alpha, chloroplastic of Gossypium barbadense (Sea Island cotton).